The sequence spans 215 residues: Cytochrome b6 (215 aa).

Residues 32-52 (IFYCLGGITLTCFLVQVATGF) form a helical membrane-spanning segment. Cys-35 contributes to the heme c binding site. Heme b is bound by residues His-86 and His-100. A run of 3 helical transmembrane segments spans residues 90 to 110 (ASMMVLMMILHVFRVYLTGGF), 116 to 136 (LTWVTGVVLAVLTASFGVTGY), and 186 to 206 (LHTFVLPLLTAVFMLMHFLMI). Heme b is bound by residues His-187 and His-202.

The protein belongs to the cytochrome b family. PetB subfamily. In terms of assembly, the 4 large subunits of the cytochrome b6-f complex are cytochrome b6, subunit IV (17 kDa polypeptide, PetD), cytochrome f and the Rieske protein, while the 4 small subunits are PetG, PetL, PetM and PetN. The complex functions as a dimer. It depends on heme b as a cofactor. Heme c serves as cofactor.

It localises to the plastid. It is found in the chloroplast thylakoid membrane. Functionally, component of the cytochrome b6-f complex, which mediates electron transfer between photosystem II (PSII) and photosystem I (PSI), cyclic electron flow around PSI, and state transitions. The chain is Cytochrome b6 from Nicotiana tabacum (Common tobacco).